A 95-amino-acid chain; its full sequence is Ribonuclease kappa-B (95 aa).

2 helical membrane-spanning segments follow: residues 12 to 32 (GLII…FFYI) and 68 to 88 (CWIA…QFYV).

This sequence belongs to the RNase K family.

It localises to the membrane. Inhibited by Zn(2+) and Hg(2+), while it is unaffected by Ca(2+). Its function is as follows. Endoribonuclease which displays activity against poly(C) and poly(U) synthetic substrates, as well as rRNA. The protein is Ribonuclease kappa-B of Ceratitis capitata (Mediterranean fruit fly).